A 384-amino-acid chain; its full sequence is MRAVVIDGAGSVRVNTQPDPALPGPDGVVVAVTAAGICGSDLHFYEGEYPFTEPVALGHEAVGTIVEAGPQVRTVGVGDLVMVSSVAGCGVCPGCETHDPVMCFSGPMIFGAGVLGGAQADLLAVPAADFQVLKIPEGITTEQALLLTDNLATGWAAAQRADISFGSAVAVIGLGAVGLCALRSAFIHGAATVFAVDRVKGRLQRAATWGATPIPSPAAETILAATRGRGADSVIDAVGTDASMSDALNAVRPGGTVSVVGVHDLQPFPVPALTCLLRSITLRMTMAPVQRTWPELIPLLQSGRLDVDGIFTTTLPLDEAAKGYATARARSGEELRFCLRPDSRDVLGAHETVDLYVHVRRCQSVADLQLEGAADGVDGPSMLN.

Zn(2+) is bound by residues Cys38, His59, Cys89, Cys92, Cys95, and Cys103.

The protein belongs to the zinc-containing alcohol dehydrogenase family. Zn(2+) is required as a cofactor.

The catalysed reaction is a primary alcohol + NAD(+) = an aldehyde + NADH + H(+). It catalyses the reaction a secondary alcohol + NAD(+) = a ketone + NADH + H(+). The protein is Probable zinc-binding alcohol dehydrogenase Rv1895 of Mycobacterium tuberculosis (strain ATCC 25618 / H37Rv).